A 364-amino-acid chain; its full sequence is G-protein coupled receptor 4 (364 aa).

Over 1–8 (MCNVSQDS) the chain is Extracellular. N-linked (GlcNAc...) asparagine glycosylation occurs at N3. The chain crosses the membrane as a helical span at residues 9–45 (CNIDSRLDSLFPPTLYIFVMVIGFPTNCLSLWAAFVQ). Intrachain disulfides connect C9-C258 and C90-C168. Over 46–49 (VRQK) the chain is Cytoplasmic. Residues 50 to 80 (NELGVYLLNLSISDLLYIATLPPWVNYFLHQ) traverse the membrane as a helical segment. At 81–85 (DNWIH) the chain is on the extracellular side. A helical membrane pass occupies residues 86–121 (GPESCKLFGFILYTNIYISIGFLSCISVDRYLAVAH). Over 122–129 (PLKFAKVR) the chain is Cytoplasmic. The helical transmembrane segment at 130-156 (RVKTAAVVSAVVWAIEIGANSAPLFHN) threads the bilayer. The Extracellular portion of the chain corresponds to 157 to 172 (ELFEDRFNHTFCFEKY). Residues 157-172 (ELFEDRFNHTFCFEKY) form an extracellular loop 2 (ECL2) region. Residue N164 is glycosylated (N-linked (GlcNAc...) asparagine). A helical transmembrane segment spans residues 173-210 (PMEDWVAQMNLYRVFVGFLFPWVLMLFCYQGILRAVKT). The Cytoplasmic portion of the chain corresponds to 211 to 214 (NVST). Residues 215 to 250 (EREEKAKIKRLALSLIAILLFCFAPYHLILLSRSVV) traverse the membrane as a helical segment. Over 251 to 260 (YLGQPCDCTF) the chain is Extracellular. Residues 261 to 289 (EENIFTAYHVSLALTSLNCVADPILYCLA) form a helical membrane-spanning segment. Residues 290-364 (NEGARSEVTR…RVRRRRDCKC (75 aa)) are Cytoplasmic-facing.

It belongs to the G-protein coupled receptor 1 family.

It is found in the cell membrane. Activated by a network of residues that connects an extracellular-facing cavity to Glu-145, a conserved charged residue buried in the transmembrane core of the receptor. Protonation likely drives conformational changes in extracellular loop 2 (ECL2), which stabilizes movement of transmembrane 3 (TM3) and a series of rearrangements that connect the extracellular-facing cavity to Glu-145, a residue only conserved in proton-sensing G-protein coupled receptors. Proton-sensing G-protein coupled receptor activated by extracellular pH, which is required to monitor pH changes and generate adaptive reactions. Ligand binding causes a conformation change that triggers signaling via guanine nucleotide-binding proteins (G proteins) and modulates the activity of downstream effectors, such as adenylate cyclase. The protein is G-protein coupled receptor 4 of Callorhinchus milii (Ghost shark).